Here is a 113-residue protein sequence, read N- to C-terminus: U11-theraphotoxin-Hhn1o (113 aa).

Positions 1–21 are cleaved as a signal peptide; it reads MNTVRVTFLLVFVLAVSLGQA. Residues 22-74 constitute a propeptide that is removed on maturation; it reads DKDENRMEMQEKTEQGKSYLDFAENLLLQKLEELEAKLLEEDSEESRNSRQKR. The segment at 61–83 is disordered; the sequence is EEDSEESRNSRQKRCIGEGVPCD. 2 cysteine pairs are disulfide-bonded: cysteine 75-cysteine 90 and cysteine 82-cysteine 95.

This sequence belongs to the neurotoxin 14 (magi-1) family. 01 (HNTX-16) subfamily. Expressed by the venom gland.

It is found in the secreted. Functionally, probable ion channel inhibitor. In Cyriopagopus hainanus (Chinese bird spider), this protein is U11-theraphotoxin-Hhn1o.